Consider the following 167-residue polypeptide: Insertion element IS1 2 protein InsB (167 aa).

Belongs to the transposase 27 family.

Functionally, absolutely required for transposition of IS1. This is Insertion element IS1 2 protein InsB (insB2) from Escherichia coli (strain K12).